The primary structure comprises 493 residues: Glutamyl-tRNA(Gln) amidotransferase subunit A (493 aa).

Active-site charge relay system residues include lysine 79 and serine 159. The active-site Acyl-ester intermediate is the serine 183.

Belongs to the amidase family. GatA subfamily. Heterotrimer of A, B and C subunits.

It carries out the reaction L-glutamyl-tRNA(Gln) + L-glutamine + ATP + H2O = L-glutaminyl-tRNA(Gln) + L-glutamate + ADP + phosphate + H(+). In terms of biological role, allows the formation of correctly charged Gln-tRNA(Gln) through the transamidation of misacylated Glu-tRNA(Gln) in organisms which lack glutaminyl-tRNA synthetase. The reaction takes place in the presence of glutamine and ATP through an activated gamma-phospho-Glu-tRNA(Gln). This Brucella abortus (strain S19) protein is Glutamyl-tRNA(Gln) amidotransferase subunit A.